The following is a 230-amino-acid chain: Large ribosomal subunit protein uL3 (230 aa).

2 disordered regions span residues 125–149 (QAIGPRSHGGGGGSKPIRQTGSLGD) and 210–230 (PNPKNPVSLFVPNSDKEVKNE).

Belongs to the universal ribosomal protein uL3 family. In terms of assembly, part of the 50S ribosomal subunit. Forms a cluster with proteins L14 and L19.

One of the primary rRNA binding proteins, it binds directly near the 3'-end of the 23S rRNA, where it nucleates assembly of the 50S subunit. In Mesomycoplasma hyopneumoniae (strain J / ATCC 25934 / NCTC 10110) (Mycoplasma hyopneumoniae), this protein is Large ribosomal subunit protein uL3.